A 347-amino-acid polypeptide reads, in one-letter code: GMP reductase (347 aa).

108–131 (ADFEKTKQILDLNSALNFVCIDVA) provides a ligand contact to NADP(+). Positions 181 and 183 each coordinate K(+). C186 acts as the Thioimidate intermediate in catalysis. Residue 216 to 239 (IVSDGGCTTPGDVAKAFGGGADFV) participates in NADP(+) binding.

Belongs to the IMPDH/GMPR family. GuaC type 1 subfamily. In terms of assembly, homotetramer.

It catalyses the reaction IMP + NH4(+) + NADP(+) = GMP + NADPH + 2 H(+). Functionally, catalyzes the irreversible NADPH-dependent deamination of GMP to IMP. It functions in the conversion of nucleobase, nucleoside and nucleotide derivatives of G to A nucleotides, and in maintaining the intracellular balance of A and G nucleotides. This chain is GMP reductase, found in Escherichia coli O81 (strain ED1a).